A 598-amino-acid chain; its full sequence is UvrABC system protein C (598 aa).

The GIY-YIG domain maps to 14-91 (DSPGCYLHKD…IQKNMPKYNI (78 aa)). The 36-residue stretch at 196–231 (DKIIEDLRSKMLAASEEMAFERAAEYRDLISGIATM) folds into the UVR domain.

The protein belongs to the UvrC family. In terms of assembly, interacts with UvrB in an incision complex.

The protein resides in the cytoplasm. In terms of biological role, the UvrABC repair system catalyzes the recognition and processing of DNA lesions. UvrC both incises the 5' and 3' sides of the lesion. The N-terminal half is responsible for the 3' incision and the C-terminal half is responsible for the 5' incision. This Streptococcus pyogenes serotype M6 (strain ATCC BAA-946 / MGAS10394) protein is UvrABC system protein C.